A 912-amino-acid chain; its full sequence is MSRFFTTGSDSESESSLSGEELVTKPVGGNYGKQPLLLSEDEEDTKRVVRSAKDKRFEELTNLIRTIRNAMKIRDVTKCLEEFELLGKAYGKAKSIVDKEGVPRFYIRILADLEDYLNELWEDKEGKKKMNKNNAKALSTLRQKIRKYNRDFESHITNYKQNPEQSADEDAEKNEEDSEGSSDEDEDDDGVTAAAFLKKKSEAPSGDSRKFLKKEDEDEDSEESEDSEAWDTSSTSSDSDSEEEEGKQTVLASRFLKKAPTTEEDKKAAEKKREDKAKKKHDRKSRRPDEEEEDNEGGEWERVRGGVPLVKEKPKMFAKGTEITHAVVIKKLNEILQARGKKGTDRAAQIELLQLLVQIASENNLGEGVIVKIKFNIIASLYDYNPNLATYMKPEMWQKCLDCINELMDILFANPNIFVGENILEESENLHNADQPLRVRGCILTLVERMDEEFTKIMQNTDPHSQEYVEHLKDEAQVCAIIERVQRYLEEKGTTEEVCRIYLRRILHTYYKFDYKAHQRQLTPPEGSSKSEQDQAENEGEDSAVLMERLCKYIYAKDRTDRIRTCAILCHIYHHALHSRWYQARDLMLMSHLQDNIQHADPPVQILYNRTMVQLGICAFRQGLTKDAHNALLDIQSSGRAKELLGQGLLLRSLQERNQEQEKVERRRQVPFHLHINLELLECVYLVSAMLLEIPYMAAHESDARRRMISKQFHHQLRVGERQPLLGPPESMREHVVAASKAMKMGDWKTCHSFIINEKMNGKVWDLFPEADKVRTMLVRKIQEESLRTYLFTYSSVYDSISMETLSDMFELDLPTVHSIISKMIINEELMASLDQPTQTVVMHRTEPTAQQNLALQLAEKLGSLVENNERVFDHKQGTYGGYFRDQKDGYRKNEGYMRRGGYRQQQSQTAY.

Positions 1–44 (MSRFFTTGSDSESESSLSGEELVTKPVGGNYGKQPLLLSEDEED) are disordered. The segment covering 8-21 (GSDSESESSLSGEE) has biased composition (low complexity). 7 positions are modified to phosphoserine: Ser-9, Ser-11, Ser-13, Ser-15, Ser-16, Ser-18, and Ser-39. Lys-99 bears the N6-acetyllysine mark. Disordered regions lie at residues 157-305 (TNYK…RVRG) and 521-541 (QLTPPEGSSKSEQDQAENEGE). Phosphoserine is present on residues Ser-166, Ser-178, Ser-181, and Ser-182. Over residues 166–190 (SADEDAEKNEEDSEGSSDEDEDDDG) the composition is skewed to acidic residues. Residues 199–215 (KKSEAPSGDSRKFLKKE) are compositionally biased toward basic and acidic residues. Acidic residues predominate over residues 216 to 229 (DEDEDSEESEDSEA). Over residues 260–277 (PTTEEDKKAAEKKREDKA) the composition is skewed to basic and acidic residues. Positions 521 to 530 (QLTPPEGSSK) are enriched in polar residues. Thr-523 carries the post-translational modification Phosphothreonine. N6-acetyllysine is present on Lys-642. The region spanning 672 to 848 (FHLHINLELL…QTVVMHRTEP (177 aa)) is the PCI domain. A disordered region spans residues 884-912 (FRDQKDGYRKNEGYMRRGGYRQQQSQTAY). Positions 885 to 898 (RDQKDGYRKNEGYM) are enriched in basic and acidic residues. Phosphoserine is present on Ser-908.

It belongs to the eIF-3 subunit C family. In terms of assembly, component of the eukaryotic translation initiation factor 3 (eIF-3) complex, which is composed of 13 subunits: EIF3A, EIF3B, EIF3C, EIF3D, EIF3E, EIF3F, EIF3G, EIF3H, EIF3I, EIF3J, EIF3K, EIF3L and EIF3M. The eIF-3 complex appears to include 3 stable modules: module A is composed of EIF3A, EIF3B, EIF3G and EIF3I; module B is composed of EIF3F, EIF3H, and EIF3M; and module C is composed of EIF3C, EIF3D, EIF3E, EIF3K and EIF3L. EIF3C of module C binds EIF3B of module A and EIF3H of module B, thereby linking the three modules. EIF3J is a labile subunit that binds to the eIF-3 complex via EIF3B. The eIF-3 complex interacts with RPS6KB1 under conditions of nutrient depletion. Mitogenic stimulation leads to binding and activation of a complex composed of MTOR and RPTOR, leading to phosphorylation and release of RPS6KB1 and binding of EIF4B to eIF-3. Identified in a HCV IRES-mediated translation complex, at least composed of EIF3C, IGF2BP1, RPS3 and HCV RNA-replicon. Interacts with ALKBH4, IFIT1 and IFIT2. Interacts with BZW2/5MP1. Phosphorylated. Phosphorylation is enhanced upon serum stimulation.

It localises to the cytoplasm. Component of the eukaryotic translation initiation factor 3 (eIF-3) complex, which is required for several steps in the initiation of protein synthesis. The eIF-3 complex associates with the 40S ribosome and facilitates the recruitment of eIF-1, eIF-1A, eIF-2:GTP:methionyl-tRNAi and eIF-5 to form the 43S pre-initiation complex (43S PIC). The eIF-3 complex stimulates mRNA recruitment to the 43S PIC and scanning of the mRNA for AUG recognition. The eIF-3 complex is also required for disassembly and recycling of post-termination ribosomal complexes and subsequently prevents premature joining of the 40S and 60S ribosomal subunits prior to initiation. The eIF-3 complex specifically targets and initiates translation of a subset of mRNAs involved in cell proliferation, including cell cycling, differentiation and apoptosis, and uses different modes of RNA stem-loop binding to exert either translational activation or repression. This Bos taurus (Bovine) protein is Eukaryotic translation initiation factor 3 subunit C.